The primary structure comprises 120 residues: Aspartate 1-decarboxylase (120 aa).

Residue Ser-25 is the Schiff-base intermediate with substrate; via pyruvic acid of the active site. Ser-25 is subject to Pyruvic acid (Ser). Thr-57 contacts substrate. The active-site Proton donor is the Tyr-58. Residue 73–75 coordinates substrate; the sequence is GAA.

This sequence belongs to the PanD family. Heterooctamer of four alpha and four beta subunits. Requires pyruvate as cofactor. Post-translationally, is synthesized initially as an inactive proenzyme, which is activated by self-cleavage at a specific serine bond to produce a beta-subunit with a hydroxyl group at its C-terminus and an alpha-subunit with a pyruvoyl group at its N-terminus.

It is found in the cytoplasm. It catalyses the reaction L-aspartate + H(+) = beta-alanine + CO2. It functions in the pathway cofactor biosynthesis; (R)-pantothenate biosynthesis; beta-alanine from L-aspartate: step 1/1. Catalyzes the pyruvoyl-dependent decarboxylation of aspartate to produce beta-alanine. The protein is Aspartate 1-decarboxylase of Ralstonia nicotianae (strain ATCC BAA-1114 / GMI1000) (Ralstonia solanacearum).